The chain runs to 871 residues: Translation initiation factor IF-2 (871 aa).

Disordered regions lie at residues 60–101 (KKNI…QEVK) and 184–203 (ESLK…KKES). Over residues 61–72 (KNIKTPTAKKPK) the composition is skewed to basic residues. The span at 73 to 101 (KENIKEQEKLNESEKKEPKKEEKLKQEVK) shows a compositional bias: basic and acidic residues. The tr-type G domain maps to 370–537 (TRAPVITIMG…IVLLQADILE (168 aa)). The segment at 379–386 (GHVDHGKT) is G1. 379 to 386 (GHVDHGKT) serves as a coordination point for GTP. Residues 404 to 408 (GITQH) are G2. Residues 425–428 (DTPG) are G3. GTP-binding positions include 425–429 (DTPGH) and 479–482 (NKMD). The interval 479–482 (NKMD) is G4. The G5 stretch occupies residues 515-517 (SAK).

Belongs to the TRAFAC class translation factor GTPase superfamily. Classic translation factor GTPase family. IF-2 subfamily.

The protein resides in the cytoplasm. One of the essential components for the initiation of protein synthesis. Protects formylmethionyl-tRNA from spontaneous hydrolysis and promotes its binding to the 30S ribosomal subunits. Also involved in the hydrolysis of GTP during the formation of the 70S ribosomal complex. This is Translation initiation factor IF-2 from Campylobacter jejuni subsp. jejuni serotype O:23/36 (strain 81-176).